The sequence spans 256 residues: Trans-aconitate 2-methyltransferase (256 aa).

Belongs to the methyltransferase superfamily. Tam family.

It is found in the cytoplasm. It catalyses the reaction trans-aconitate + S-adenosyl-L-methionine = (E)-3-(methoxycarbonyl)pent-2-enedioate + S-adenosyl-L-homocysteine. Functionally, catalyzes the S-adenosylmethionine monomethyl esterification of trans-aconitate. In Afipia carboxidovorans (strain ATCC 49405 / DSM 1227 / KCTC 32145 / OM5) (Oligotropha carboxidovorans), this protein is Trans-aconitate 2-methyltransferase.